The chain runs to 68 residues: ATP synthase F(0) complex subunit 8 (68 aa).

The helical transmembrane segment at 8–24 threads the bilayer; sequence VWPTMIAPMLLTLFLIT. Position 54 is an N6-acetyllysine; alternate (Lys54). Lys54 carries the post-translational modification N6-succinyllysine; alternate. Residue Lys57 is modified to N6-acetyllysine.

It belongs to the ATPase protein 8 family. Component of the ATP synthase complex composed at least of ATP5F1A/subunit alpha, ATP5F1B/subunit beta, ATP5MC1/subunit c (homooctomer), MT-ATP6/subunit a, MT-ATP8/subunit 8, ATP5ME/subunit e, ATP5MF/subunit f, ATP5MG/subunit g, ATP5MK/subunit k, ATP5MJ/subunit j, ATP5F1C/subunit gamma, ATP5F1D/subunit delta, ATP5F1E/subunit epsilon, ATP5PF/subunit F6, ATP5PB/subunit b, ATP5PD/subunit d, ATP5PO/subunit OSCP. ATP synthase complex consists of a soluble F(1) head domain (subunits alpha(3) and beta(3)) - the catalytic core - and a membrane F(0) domain - the membrane proton channel (subunits c, a, 8, e, f, g, k and j). These two domains are linked by a central stalk (subunits gamma, delta, and epsilon) rotating inside the F1 region and a stationary peripheral stalk (subunits F6, b, d, and OSCP). Interacts with PRICKLE3.

It is found in the mitochondrion membrane. Subunit 8, of the mitochondrial membrane ATP synthase complex (F(1)F(0) ATP synthase or Complex V) that produces ATP from ADP in the presence of a proton gradient across the membrane which is generated by electron transport complexes of the respiratory chain. ATP synthase complex consist of a soluble F(1) head domain - the catalytic core - and a membrane F(1) domain - the membrane proton channel. These two domains are linked by a central stalk rotating inside the F(1) region and a stationary peripheral stalk. During catalysis, ATP synthesis in the catalytic domain of F(1) is coupled via a rotary mechanism of the central stalk subunits to proton translocation. In vivo, can only synthesize ATP although its ATP hydrolase activity can be activated artificially in vitro. Part of the complex F(0) domain. This chain is ATP synthase F(0) complex subunit 8, found in Gorilla gorilla gorilla (Western lowland gorilla).